The following is a 351-amino-acid chain: Phosphoribosylformylglycinamidine cyclo-ligase (351 aa).

The protein belongs to the AIR synthase family.

The protein resides in the cytoplasm. It catalyses the reaction 2-formamido-N(1)-(5-O-phospho-beta-D-ribosyl)acetamidine + ATP = 5-amino-1-(5-phospho-beta-D-ribosyl)imidazole + ADP + phosphate + H(+). The protein operates within purine metabolism; IMP biosynthesis via de novo pathway; 5-amino-1-(5-phospho-D-ribosyl)imidazole from N(2)-formyl-N(1)-(5-phospho-D-ribosyl)glycinamide: step 2/2. This is Phosphoribosylformylglycinamidine cyclo-ligase from Xylella fastidiosa (strain 9a5c).